Consider the following 550-residue polypeptide: Formate--tetrahydrofolate ligase (550 aa).

An ATP-binding site is contributed by 62–69; that stretch reads TPAGEGKS.

This sequence belongs to the formate--tetrahydrofolate ligase family.

It catalyses the reaction (6S)-5,6,7,8-tetrahydrofolate + formate + ATP = (6R)-10-formyltetrahydrofolate + ADP + phosphate. The protein operates within one-carbon metabolism; tetrahydrofolate interconversion. The protein is Formate--tetrahydrofolate ligase of Corynebacterium diphtheriae (strain ATCC 700971 / NCTC 13129 / Biotype gravis).